The sequence spans 103 residues: Co-chaperonin GroES (103 aa).

Belongs to the GroES chaperonin family. Heptamer of 7 subunits arranged in a ring. Interacts with the chaperonin GroEL.

The protein resides in the cytoplasm. In terms of biological role, together with the chaperonin GroEL, plays an essential role in assisting protein folding. The GroEL-GroES system forms a nano-cage that allows encapsulation of the non-native substrate proteins and provides a physical environment optimized to promote and accelerate protein folding. GroES binds to the apical surface of the GroEL ring, thereby capping the opening of the GroEL channel. This chain is Co-chaperonin GroES, found in Thermosynechococcus vestitus (strain NIES-2133 / IAM M-273 / BP-1).